The sequence spans 219 residues: HTH-type transcriptional activator FasR (219 aa).

Residues 1–30 (MSDLANTAERRGEKRPAGGNRRGNRLPRDE) are disordered. An HTH tetR-type domain is found at 29–89 (DERRGQLLIA…AVLQRHVDNL (61 aa)). Residues 52–71 (GMDEIADRAGVSKPVLYQHF) constitute a DNA-binding region (H-T-H motif).

In terms of assembly, homodimer.

Its activity is regulated as follows. FasR:DNA binding is regulated by long-chain acyl-CoAs (C14- to C26-CoA), which act as effector molecules that modulate the affinity of FasR for its DNA binding sequences and therefore modulate the expression of the essential fas-acpS operon. Its function is as follows. Transcriptional activator that plays a central role in sensing mycobacterial long-chain fatty acids and regulating lipid biosynthesis. Activates the expression of the genes encoding the fatty acid synthase (fas) and the 4-phosphopantetheinyl transferase (acpS), whose products are involved in the fatty acid and mycolic acid biosynthesis. Specifically binds to three conserved operator sequences present in the fas-acpS promoter region. Essential for M.smegmatis viability. The protein is HTH-type transcriptional activator FasR of Mycolicibacterium smegmatis (strain ATCC 700084 / mc(2)155) (Mycobacterium smegmatis).